A 489-amino-acid chain; its full sequence is Mitochondrial-processing peptidase subunit beta (489 aa).

The N-terminal 45 residues, 1 to 45, are a transit peptide targeting the mitochondrion; sequence MAAAALSRTLLPEARRRLWGFTRRLPLRRAAAQPLYFGGDRLRST. His101 serves as a coordination point for Zn(2+). The Proton acceptor role is filled by Glu104. The Zn(2+) site is built by His105 and Glu181.

It belongs to the peptidase M16 family. Heterodimer of PMPCA (alpha) and PMPCB (beta) subunits, forming the mitochondrial processing protease (MPP) in which PMPCA is involved in substrate recognition and binding and PMPCB is the catalytic subunit. Zn(2+) is required as a cofactor.

The protein localises to the mitochondrion matrix. It carries out the reaction Release of N-terminal transit peptides from precursor proteins imported into the mitochondrion, typically with Arg in position P2.. With respect to regulation, binding to PMPCA is required for catalytic activity. Its function is as follows. Catalytic subunit of the essential mitochondrial processing protease (MPP), which cleaves the mitochondrial sequence off newly imported precursors proteins. Preferentially, cleaves after an arginine at position P2. Required for PINK1 turnover by coupling PINK1 mitochondrial import and cleavage, which results in subsequent PINK1 proteolysis. In Mus musculus (Mouse), this protein is Mitochondrial-processing peptidase subunit beta (Pmpcb).